Reading from the N-terminus, the 465-residue chain is Dihydrolipoyl dehydrogenase (465 aa).

FAD is bound by residues 34 to 42 (EKREAGGTC), Lys-51, and Gly-114. Residues Cys-42 and Cys-47 are joined by a disulfide bond. Residues 180–184 (GGGVI), Glu-203, Val-237, and 264–267 (SIGR) each bind NAD(+). Asp-307 and Ala-315 together coordinate FAD. His-439 serves as the catalytic Proton acceptor.

This sequence belongs to the class-I pyridine nucleotide-disulfide oxidoreductase family. FAD is required as a cofactor.

The protein localises to the cytoplasm. It carries out the reaction N(6)-[(R)-dihydrolipoyl]-L-lysyl-[protein] + NAD(+) = N(6)-[(R)-lipoyl]-L-lysyl-[protein] + NADH + H(+). Functionally, the branched-chain alpha-keto dehydrogenase complex catalyzes the overall conversion of alpha-keto acids to acyl-CoA and CO(2). It contains multiple copies of 3 enzymatic components: branched-chain alpha-keto acid decarboxylase (E1), lipoamide acyltransferase (E2) and lipoamide dehydrogenase (E3). The protein is Dihydrolipoyl dehydrogenase (lpdA) of Chlamydia trachomatis serovar D (strain ATCC VR-885 / DSM 19411 / UW-3/Cx).